Consider the following 200-residue polypeptide: Probable gluconokinase (200 aa).

34-41 serves as a coordination point for ATP; the sequence is GVSGSGKT.

The protein belongs to the gluconokinase GntK/GntV family.

It catalyses the reaction D-gluconate + ATP = 6-phospho-D-gluconate + ADP + H(+). It functions in the pathway carbohydrate acid metabolism; D-gluconate degradation. The chain is Probable gluconokinase from Dictyostelium discoideum (Social amoeba).